A 260-amino-acid polypeptide reads, in one-letter code: Adenosylcobinamide-GDP ribazoletransferase (260 aa).

Helical transmembrane passes span 42-62 (TWALPVAGLLVGLAGALVYKI), 68-88 (LTPNLAALLALATTALITGAL), 118-137 (IGTYGVCALILSFGLRWSAL), 144-166 (WLVTLALCAAHCAARAGVPAFMS), 180-200 (AGAPPGRSVAIAFAVGTLVLT), 201-221 (LALGPGKALVGLILLSLAGLI), and 237-257 (ILGAFEQTGEIVILLVAAAFQ).

This sequence belongs to the CobS family. It depends on Mg(2+) as a cofactor.

The protein resides in the cell inner membrane. The catalysed reaction is alpha-ribazole + adenosylcob(III)inamide-GDP = adenosylcob(III)alamin + GMP + H(+). The enzyme catalyses alpha-ribazole 5'-phosphate + adenosylcob(III)inamide-GDP = adenosylcob(III)alamin 5'-phosphate + GMP + H(+). Its pathway is cofactor biosynthesis; adenosylcobalamin biosynthesis; adenosylcobalamin from cob(II)yrinate a,c-diamide: step 7/7. Functionally, joins adenosylcobinamide-GDP and alpha-ribazole to generate adenosylcobalamin (Ado-cobalamin). Also synthesizes adenosylcobalamin 5'-phosphate from adenosylcobinamide-GDP and alpha-ribazole 5'-phosphate. This Bradyrhizobium diazoefficiens (strain JCM 10833 / BCRC 13528 / IAM 13628 / NBRC 14792 / USDA 110) protein is Adenosylcobinamide-GDP ribazoletransferase.